The following is a 455-amino-acid chain: Bifunctional protein GlmU (455 aa).

Residues Met1 to Arg227 form a pyrophosphorylase region. UDP-N-acetyl-alpha-D-glucosamine contacts are provided by residues Leu8–Gly11, Lys22, Gln73, Gly78–Thr79, Tyr100–Asp102, Gly137, Glu152, Asn167, and Asn225. Asp102 lines the Mg(2+) pocket. Asn225 lines the Mg(2+) pocket. The interval Trp228–Ala248 is linker. Positions Gly249 to Glu455 are N-acetyltransferase. Arg332 and Lys350 together coordinate UDP-N-acetyl-alpha-D-glucosamine. The active-site Proton acceptor is the His362. Residues Tyr365 and Asn376 each contribute to the UDP-N-acetyl-alpha-D-glucosamine site. Acetyl-CoA contacts are provided by residues Ala379, Asn385–Tyr386, Ser404, Ala422, and Arg439.

In the N-terminal section; belongs to the N-acetylglucosamine-1-phosphate uridyltransferase family. This sequence in the C-terminal section; belongs to the transferase hexapeptide repeat family. In terms of assembly, homotrimer. It depends on Mg(2+) as a cofactor.

It is found in the cytoplasm. It catalyses the reaction alpha-D-glucosamine 1-phosphate + acetyl-CoA = N-acetyl-alpha-D-glucosamine 1-phosphate + CoA + H(+). The enzyme catalyses N-acetyl-alpha-D-glucosamine 1-phosphate + UTP + H(+) = UDP-N-acetyl-alpha-D-glucosamine + diphosphate. It participates in nucleotide-sugar biosynthesis; UDP-N-acetyl-alpha-D-glucosamine biosynthesis; N-acetyl-alpha-D-glucosamine 1-phosphate from alpha-D-glucosamine 6-phosphate (route II): step 2/2. The protein operates within nucleotide-sugar biosynthesis; UDP-N-acetyl-alpha-D-glucosamine biosynthesis; UDP-N-acetyl-alpha-D-glucosamine from N-acetyl-alpha-D-glucosamine 1-phosphate: step 1/1. Its pathway is bacterial outer membrane biogenesis; LPS lipid A biosynthesis. Functionally, catalyzes the last two sequential reactions in the de novo biosynthetic pathway for UDP-N-acetylglucosamine (UDP-GlcNAc). The C-terminal domain catalyzes the transfer of acetyl group from acetyl coenzyme A to glucosamine-1-phosphate (GlcN-1-P) to produce N-acetylglucosamine-1-phosphate (GlcNAc-1-P), which is converted into UDP-GlcNAc by the transfer of uridine 5-monophosphate (from uridine 5-triphosphate), a reaction catalyzed by the N-terminal domain. In Coxiella burnetii (strain Dugway 5J108-111), this protein is Bifunctional protein GlmU.